Reading from the N-terminus, the 427-residue chain is MSRSETLFNNAQKHIPGGVNSPVRAFKSVGGTPLFFKHAEGAYVLDEDDKRYVDYVGSWGPMILGHSHPDVLDAVRRQLDHGLSYGAPTALEVEMADLVCSMVPSMEMVRMVSSGTEATMSAIRLARGYTGRDSIIKFEGCYHGHSDSLLVKAGSGALTFGVPNSPGVPAAFAKHTLTLPFNDIEAVRKTLGEVGKEVACIIVEPVAGNMNCVPPAPGFLEGLREACDEHGVVLIFDEVMTGFRVALGGAQAYYGVTPDLSTFGKIIGGGMPVGAFGGKREIMQQISPLGPVYQAGTLSGNPLAMAAGLTTLRLISRPGFHNELTAYTTRMLDGLQQRADAAGIPFVTTQAGGMFGLYFSGADAIVTFEDVMASDVERFKRFFHLMLDGGVYLAPSAFEAGFTSIAHGDKELEITLNAAEKAFAALK.

K265 bears the N6-(pyridoxal phosphate)lysine mark.

It belongs to the class-III pyridoxal-phosphate-dependent aminotransferase family. HemL subfamily. In terms of assembly, homodimer. It depends on pyridoxal 5'-phosphate as a cofactor.

It is found in the cytoplasm. The enzyme catalyses (S)-4-amino-5-oxopentanoate = 5-aminolevulinate. It participates in porphyrin-containing compound metabolism; protoporphyrin-IX biosynthesis; 5-aminolevulinate from L-glutamyl-tRNA(Glu): step 2/2. This is Glutamate-1-semialdehyde 2,1-aminomutase from Pseudomonas aeruginosa (strain UCBPP-PA14).